Here is a 472-residue protein sequence, read N- to C-terminus: Glutamate--tRNA ligase 2 (472 aa).

The 'HIGH' region motif lies at 12–22 (PSPSGLLHLGN). The 'KMSKS' region signature appears at 253–257 (PLSKR). Residue lysine 256 participates in ATP binding.

Belongs to the class-I aminoacyl-tRNA synthetase family. Glutamate--tRNA ligase type 1 subfamily. Monomer.

It is found in the cytoplasm. The enzyme catalyses tRNA(Glu) + L-glutamate + ATP = L-glutamyl-tRNA(Glu) + AMP + diphosphate. Catalyzes the attachment of glutamate to tRNA(Glu) in a two-step reaction: glutamate is first activated by ATP to form Glu-AMP and then transferred to the acceptor end of tRNA(Glu). The protein is Glutamate--tRNA ligase 2 of Nitrosococcus oceani (strain ATCC 19707 / BCRC 17464 / JCM 30415 / NCIMB 11848 / C-107).